Here is a 123-residue protein sequence, read N- to C-terminus: MENSLFKKSEKKIRRALRVRKVLRGSSLKPRLSVVKTNKHIYVQLIDDSIGKTLASVSTMAKSSKASGLTKKNQDVAKALGSKIAELGKNLQVDRVVFDRGPFKYHGVIAMVADGAREGGLQF.

It belongs to the universal ribosomal protein uL18 family. Part of the 50S ribosomal subunit; part of the 5S rRNA/L5/L18/L25 subcomplex. Contacts the 5S and 23S rRNAs.

This is one of the proteins that bind and probably mediate the attachment of the 5S RNA into the large ribosomal subunit, where it forms part of the central protuberance. The chain is Large ribosomal subunit protein uL18 from Chlamydia felis (strain Fe/C-56) (Chlamydophila felis).